Here is an 80-residue protein sequence, read N- to C-terminus: Exodeoxyribonuclease 7 small subunit (80 aa).

Belongs to the XseB family. As to quaternary structure, heterooligomer composed of large and small subunits.

It localises to the cytoplasm. It carries out the reaction Exonucleolytic cleavage in either 5'- to 3'- or 3'- to 5'-direction to yield nucleoside 5'-phosphates.. Bidirectionally degrades single-stranded DNA into large acid-insoluble oligonucleotides, which are then degraded further into small acid-soluble oligonucleotides. This Enterobacter sp. (strain 638) protein is Exodeoxyribonuclease 7 small subunit.